The following is a 136-amino-acid chain: Large ribosomal subunit protein uL16 (136 aa).

It belongs to the universal ribosomal protein uL16 family. In terms of assembly, part of the 50S ribosomal subunit.

Binds 23S rRNA and is also seen to make contacts with the A and possibly P site tRNAs. The sequence is that of Large ribosomal subunit protein uL16 from Vibrio atlanticus (strain LGP32) (Vibrio splendidus (strain Mel32)).